We begin with the raw amino-acid sequence, 296 residues long: 33 kDa chaperonin (296 aa).

2 disulfides stabilise this stretch: cysteine 236–cysteine 238 and cysteine 269–cysteine 272.

This sequence belongs to the HSP33 family. Under oxidizing conditions two disulfide bonds are formed involving the reactive cysteines. Under reducing conditions zinc is bound to the reactive cysteines and the protein is inactive.

The protein resides in the cytoplasm. Its function is as follows. Redox regulated molecular chaperone. Protects both thermally unfolding and oxidatively damaged proteins from irreversible aggregation. Plays an important role in the bacterial defense system toward oxidative stress. This Lactobacillus acidophilus (strain ATCC 700396 / NCK56 / N2 / NCFM) protein is 33 kDa chaperonin.